A 289-amino-acid chain; its full sequence is Diaminopimelate epimerase (289 aa).

Residues Asn-13, Gln-47, and Asn-67 each coordinate substrate. The active-site Proton donor is Cys-76. Residues 77–78 (GN), Asn-167, Asn-200, and 218–219 (ER) each bind substrate. The active-site Proton acceptor is Cys-227. 228–229 (GT) contributes to the substrate binding site.

This sequence belongs to the diaminopimelate epimerase family. Homodimer.

Its subcellular location is the cytoplasm. It catalyses the reaction (2S,6S)-2,6-diaminopimelate = meso-2,6-diaminopimelate. Its pathway is amino-acid biosynthesis; L-lysine biosynthesis via DAP pathway; DL-2,6-diaminopimelate from LL-2,6-diaminopimelate: step 1/1. Catalyzes the stereoinversion of LL-2,6-diaminopimelate (L,L-DAP) to meso-diaminopimelate (meso-DAP), a precursor of L-lysine and an essential component of the bacterial peptidoglycan. The protein is Diaminopimelate epimerase of Burkholderia ambifaria (strain ATCC BAA-244 / DSM 16087 / CCUG 44356 / LMG 19182 / AMMD) (Burkholderia cepacia (strain AMMD)).